Here is a 249-residue protein sequence, read N- to C-terminus: Ditrans,polycis-undecaprenyl-diphosphate synthase ((2E,6E)-farnesyl-diphosphate specific) (249 aa).

Asp18 is an active-site residue. Asp18 provides a ligand contact to Mg(2+). Residues 19–22, Phe23, Lys31, His35, and 63–65 each bind substrate; these read GNNR and SSE. The Proton acceptor role is filled by Asn66. Substrate-binding positions include Trp67, Arg69, Arg186, and 192-194; that span reads RLS. Mg(2+) is bound at residue Glu205.

It belongs to the UPP synthase family. As to quaternary structure, homodimer. Mg(2+) serves as cofactor.

It carries out the reaction 8 isopentenyl diphosphate + (2E,6E)-farnesyl diphosphate = di-trans,octa-cis-undecaprenyl diphosphate + 8 diphosphate. Catalyzes the sequential condensation of isopentenyl diphosphate (IPP) with (2E,6E)-farnesyl diphosphate (E,E-FPP) to yield (2Z,6Z,10Z,14Z,18Z,22Z,26Z,30Z,34E,38E)-undecaprenyl diphosphate (di-trans,octa-cis-UPP). UPP is the precursor of glycosyl carrier lipid in the biosynthesis of bacterial cell wall polysaccharide components such as peptidoglycan and lipopolysaccharide. This Acinetobacter baylyi (strain ATCC 33305 / BD413 / ADP1) protein is Ditrans,polycis-undecaprenyl-diphosphate synthase ((2E,6E)-farnesyl-diphosphate specific).